Here is a 659-residue protein sequence, read N- to C-terminus: Exoribonuclease 2 (659 aa).

Residues 189 to 531 (RENLTALHFV…NHRLIKAVLA (343 aa)) form the RNB domain. The 83-residue stretch at 576 to 658 (NVEFNAEVQD…ATRSIVGEIL (83 aa)) folds into the S1 motif domain.

The protein belongs to the RNR ribonuclease family. RNase II subfamily.

The protein localises to the cytoplasm. It catalyses the reaction Exonucleolytic cleavage in the 3'- to 5'-direction to yield nucleoside 5'-phosphates.. In terms of biological role, involved in mRNA degradation. Hydrolyzes single-stranded polyribonucleotides processively in the 3' to 5' direction. This is Exoribonuclease 2 from Haemophilus influenzae (strain 86-028NP).